The following is a 654-amino-acid chain: C6 finger domain transcription factor nscR (654 aa).

A DNA-binding region (zn(2)-C6 fungal-type) is located at residues C17–C43.

Its subcellular location is the nucleus. Transcription factor that specifically regulates the neosartoricin B biosynthesis gene cluster. In Trichophyton verrucosum (strain HKI 0517), this protein is C6 finger domain transcription factor nscR.